A 332-amino-acid polypeptide reads, in one-letter code: Transaldolase (332 aa).

The active-site Schiff-base intermediate with substrate is K135.

Belongs to the transaldolase family. Type 1 subfamily. Homodimer.

It is found in the cytoplasm. It catalyses the reaction D-sedoheptulose 7-phosphate + D-glyceraldehyde 3-phosphate = D-erythrose 4-phosphate + beta-D-fructose 6-phosphate. The protein operates within carbohydrate degradation; pentose phosphate pathway; D-glyceraldehyde 3-phosphate and beta-D-fructose 6-phosphate from D-ribose 5-phosphate and D-xylulose 5-phosphate (non-oxidative stage): step 2/3. Functionally, transaldolase is important for the balance of metabolites in the pentose-phosphate pathway. This Prochlorococcus marinus (strain NATL2A) protein is Transaldolase.